The following is a 267-amino-acid chain: RWD domain-containing protein 3 (267 aa).

The RWD domain occupies 7–114; the sequence is QELSALAAIF…LWIQQNLRLV (108 aa). 2 interaction with UBE2I/UBC9 regions span residues 13-15 and 100-102; these read AAI and VHE.

In terms of assembly, interacts with UBE2I/UBC9, NFKBIA, HIF1A and NCOA2.

Its subcellular location is the nucleus. The protein resides in the cytoplasm. In terms of biological role, enhancer of SUMO conjugation. Via its interaction with UBE2I/UBC9, increases SUMO conjugation to proteins by promoting the binding of E1 and E2 enzymes, thioester linkage between SUMO and UBE2I/UBC9 and transfer of SUMO to specific target proteins which include HIF1A, PIAS, NFKBIA, NR3C1 and TOP1. Positively regulates the NF-kappa-B signaling pathway by enhancing the sumoylation of NF-kappa-B inhibitor alpha (NFKBIA), promoting its stabilization which consequently leads to an increased inhibition of NF-kappa-B transcriptional activity. Negatively regulates the hypoxia-inducible factor-1 alpha (HIF1A) signaling pathway by increasing the sumoylation of HIF1A, promoting its stabilization, transcriptional activity and the expression of its target gene VEGFA during hypoxia. Has no effect on ubiquitination. In Mus musculus (Mouse), this protein is RWD domain-containing protein 3 (Rwdd3).